The primary structure comprises 199 residues: Charged multivesicular body protein 1B1 (199 aa).

Positions 10-48 (NLKFAAKELNRSSKKCDKEEKAEKAKIKKAIQKGNMEVA) form a coiled coil. Residues 132–156 (MEDTMSSTTTLTTPQNQVDMLLQEM) form an interaction with IST1 region. Residues 167-199 (ELPQGQTGSVGTSVASAEQDELSQRLARLRDQV) are disordered. Positions 170–182 (QGQTGSVGTSVAS) are enriched in polar residues. The interval 174-199 (GSVGTSVASAEQDELSQRLARLRDQV) is interaction with SPAST. The stretch at 178–199 (TSVASAEQDELSQRLARLRDQV) forms a coiled coil. The tract at residues 180 to 196 (VASAEQDELSQRLARLR) is interaction with VPS4A, MITD1 and STAMBP. The interval 180–199 (VASAEQDELSQRLARLRDQV) is interaction with VTA1. An interaction with VPS4B region spans residues 183-199 (AEQDELSQRLARLRDQV). Residues 186-196 (DELSQRLARLR) carry the MIT-interacting motif motif.

Belongs to the SNF7 family. In terms of assembly, probable peripherally associated component of the endosomal sorting required for transport complex III (ESCRT-III). ESCRT-III components are thought to multimerize to form a flat lattice on the perimeter membrane of the endosome. Several assembly forms of ESCRT-III may exist that interact and act sequentially. Interacts with CHMP1A. Interacts with VTA1; the interaction probably involves the open conformation of CHMP1B. Interacts with CHMP2A. Interacts with VPS4A; the interaction is direct. Interacts with VPS4B; the interaction is direct. Interacts with SPAST (via MIT domain); the interaction is direct. Interacts with IST1. Interacts with MITD1. Interacts with STAMBP.

It localises to the cytoplasm. The protein resides in the cytosol. The protein localises to the endosome. Its subcellular location is the late endosome membrane. Functionally, probable peripherally associated component of the endosomal sorting required for transport complex III (ESCRT-III) which is involved in multivesicular bodies (MVBs) formation and sorting of endosomal cargo proteins into MVBs. MVBs contain intraluminal vesicles (ILVs) that are generated by invagination and scission from the limiting membrane of the endosome and mostly are delivered to lysosomes enabling degradation of membrane proteins, such as stimulated growth factor receptors, lysosomal enzymes and lipids. The MVB pathway appears to require the sequential function of ESCRT-O, -I,-II and -III complexes. ESCRT-III proteins mostly dissociate from the invaginating membrane before the ILV is released. The ESCRT machinery also functions in topologically equivalent membrane fission events, such as the terminal stages of cytokinesis. ESCRT-III proteins are believed to mediate the necessary vesicle extrusion and/or membrane fission activities, possibly in conjunction with the AAA ATPase VPS4. Involved in cytokinesis. Involved in recruiting VPS4A and/or VPS4B and SPAST to the midbody of dividing cells. The polypeptide is Charged multivesicular body protein 1B1 (Mus musculus (Mouse)).